We begin with the raw amino-acid sequence, 637 residues long: Conglutin beta 5 (637 aa).

The signal sequence occupies residues Met1–Gly30. Basic and acidic residues-rich tracts occupy residues Asp33–Glu105, Arg136–Glu174, and Asp184–Glu203. Disordered stretches follow at residues Asp33–Ser221 and Glu384–Asn439. A Cupin type-1 1 domain is found at Tyr217 to Gln375. Residues Glu389–Lys417 are compositionally biased toward basic and acidic residues. Positions Phe434 to Glu594 constitute a Cupin type-1 2 domain. Asn544 carries N-linked (GlcNAc...) asparagine glycosylation. The span at Ala606–Gln615 shows a compositional bias: low complexity. The tract at residues Ala606–Arg626 is disordered.

The protein belongs to the 7S seed storage protein family. As to quaternary structure, component of globulins complexes which accumulate in seeds.

Functionally, seed storage protein. Accumulates during seed development and is hydrolyzed after germination to provide a carbon and nitrogen source for the developing seedling. In Lupinus angustifolius (Narrow-leaved blue lupine), this protein is Conglutin beta 5.